We begin with the raw amino-acid sequence, 991 residues long: Valine--tRNA ligase (991 aa).

Residues 43-53 (PNVTGTLHMGH) carry the 'HIGH' region motif. The 'KMSKS' region motif lies at 582–586 (KMSKS). K585 is a binding site for ATP. The disordered stretch occupies residues 689–711 (AHSPAQHQAGQDGQDAPRTPQPR). Low complexity predominate over residues 693-704 (AQHQAGQDGQDA). The stretch at 925–988 (LIDVDAERAR…TQLNGLRERR (64 aa)) forms a coiled coil.

It belongs to the class-I aminoacyl-tRNA synthetase family. ValS type 1 subfamily. As to quaternary structure, monomer.

The protein resides in the cytoplasm. It catalyses the reaction tRNA(Val) + L-valine + ATP = L-valyl-tRNA(Val) + AMP + diphosphate. Catalyzes the attachment of valine to tRNA(Val). As ValRS can inadvertently accommodate and process structurally similar amino acids such as threonine, to avoid such errors, it has a 'posttransfer' editing activity that hydrolyzes mischarged Thr-tRNA(Val) in a tRNA-dependent manner. The sequence is that of Valine--tRNA ligase from Xylella fastidiosa (strain M12).